Here is a 101-residue protein sequence, read N- to C-terminus: Protein S100-A3 (101 aa).

Ala2 is subject to N-acetylalanine. 2 EF-hand domains span residues 12-47 (IVCTFQEYAGRCGDKYKLCQAELKELLQKELATWTP) and 50-85 (FRECDYNKFMSVLDTNKDCEVDFVEYVRSLACLCLY). Residues Lys28 and Glu33 each contribute to the Ca(2+) site. A disulfide bridge connects residues Cys30 and Cys68. A Citrulline; by PAD3 modification is found at Arg51. Ca(2+)-binding residues include Asp63, Asn65, Asp67, Glu69, and Glu74. Cys81 and Cys99 are disulfide-bonded. Zn(2+) contacts are provided by Cys83, Cys86, His87, and Cys93.

The protein belongs to the S-100 family. In terms of assembly, homodimer and homotetramer for the citrullinated form. In terms of processing, more than half of the arginine residues undergo citrullination by PAD1 and PAD2. Arg-51 is specifically citrullinated by PAD3 and promotes tetramerization. In terms of tissue distribution, skin specific, specifically expressed at the inner endocuticle of hair fibers.

The protein localises to the cytoplasm. In terms of biological role, binds both calcium and zinc. May be involved in calcium-dependent cuticle cell differentiation, hair shaft and hair cuticular barrier formation. The protein is Protein S100-A3 (S100A3) of Homo sapiens (Human).